Here is a 499-residue protein sequence, read N- to C-terminus: Myocyte-specific enhancer factor 2A (499 aa).

Residues 3 to 57 form the MADS-box domain; it reads RKKIQITRIMDERNRQVTFTKRKFGLMKKAYELSVLCDCEIALIIFNSSNKLFQY. Residue K4 is modified to N6-acetyllysine. A DNA-binding region (mef2-type) is located at residues 58 to 86; sequence ASTDMDKVLLKYTEYNEPHESRTNSDIVE. At K117 the chain carries N6-acetyllysine. Low complexity predominate over residues 173 to 185; that stretch reads TSTTMLSPPQTTL. Residues 173 to 269 are disordered; that stretch reads TSTTMLSPPQ…GGGLGMNNRK (97 aa). Polar residues predominate over residues 210 to 233; that stretch reads TDLTVPNGAGTSPVGNGVWNSRAS. N6-acetyllysine is present on residues K248, K253, K269, and K281. The required for interaction with MAPKs stretch occupies residues 265–282; that stretch reads MNNRKPDLRVVIPPSSKG. The tract at residues 288–295 is beta domain; the sequence is TEEDELEL. The span at 380–392 shows a compositional bias: low complexity; the sequence is VSGSQLSQGSNLS. The segment at 380-499 is disordered; that stretch reads VSGSQLSQGS…KRMRMDTWVT (120 aa). K402 is subject to N6-acetyllysine; alternate. A Glycyl lysine isopeptide (Lys-Gly) (interchain with G-Cter in SUMO); alternate cross-link involves residue K402. Residues 421-436 are compositionally biased toward pro residues; the sequence is QQPPQQPQPPQPPQQP. Over residues 445-458 the composition is skewed to low complexity; that stretch reads SPVDSLSSSSSSYD. Composition is skewed to basic and acidic residues over residues 459–469 and 480–499; these read GSDREDPRSDF and NSED…TWVT.

In terms of assembly, binds DNA as a homo- or heterodimer. Sumoylation on Lys-402 is enhanced by PIAS1 and represses transcriptional activity. Has no effect on nuclear location nor on DNA binding. Sumoylated by SUMO1 and, to a lesser extent by SUMO2 and SUMO3. In terms of processing, acetylation on Lys-402 activates transcriptional activity. In terms of tissue distribution, expressed in both embryonic and adult tissues with high expression in heart and skeletal muscle. Also expressed in gut, lung and brain of 15 dpc embryos and adults.

The protein localises to the nucleus. Transcriptional activator which binds specifically to the MEF2 element, 5'-YTA[AT](4)TAR-3', found in numerous muscle-specific genes. Mediates cellular functions in skeletal and cardiac muscle development,. This is Myocyte-specific enhancer factor 2A (MEF2A) from Gallus gallus (Chicken).